A 762-amino-acid polypeptide reads, in one-letter code: Mediator of RNA polymerase II transcription subunit 15 (762 aa).

Disordered stretches follow at residues 70 to 102, 311 to 330, and 406 to 494; these read AQQAQQDGGGNSSQQGGGGGGGGSGMPDPINAL, GVGHGGPAMQQQQQAGGMGP, and GSGG…LNPQ. Residues 76–94 are compositionally biased toward gly residues; it reads DGGGNSSQQGGGGGGGGSG. Polar residues predominate over residues 465-481; that stretch reads QRSTIGQSPGGSLNTPG.

This sequence belongs to the Mediator complex subunit 15 family. Component of the Mediator complex.

It localises to the nucleus. Component of the Mediator complex, a coactivator involved in the regulated transcription of nearly all RNA polymerase II-dependent genes. Mediator functions as a bridge to convey information from gene-specific regulatory proteins to the basal RNA polymerase II transcription machinery. Mediator is recruited to promoters by direct interactions with regulatory proteins and serves as a scaffold for the assembly of a functional preinitiation complex with RNA polymerase II and the general transcription factors. This Anopheles gambiae (African malaria mosquito) protein is Mediator of RNA polymerase II transcription subunit 15 (MED15).